We begin with the raw amino-acid sequence, 609 residues long: Cell division protein DipM (609 aa).

The first 24 residues, 1–24 (MRQLWTQAAVIALTAGTLGAPAHA), serve as a signal peptide directing secretion. The tract at residues 21-103 (PAHASGQSGQ…PVLRATPPRT (83 aa)) is disordered. Residues 25 to 38 (SGQSGQRFTPNFPI) are compositionally biased toward polar residues. The span at 79 to 93 (LPPPAPVSTPAPAPQ) shows a compositional bias: pro residues. 2 consecutive LysM domains span residues 121–165 (QVRV…KIKG) and 171–215 (KAYV…KLLL). 2 stretches are compositionally biased toward low complexity: residues 242-258 (AEPA…AATP) and 265-280 (PVSE…STTT). Positions 242 to 280 (AEPAPATTRPATPAATPSRPVRQPVSEETSEPATTSTTT) are disordered. LysM domains follow at residues 295-339 (QVHT…KIKG) and 345-389 (KAYS…KIAL). Residues 389–457 (LPDGFRDKGP…AAQPITPPPS (69 aa)) are disordered. Low complexity predominate over residues 400-429 (RTTTTTRPATPPANTYARVDSSAAAASTPS). The interval 503–603 (NDGLNIRAPQ…VKDKAKPVDP (101 aa)) is lytM.

Its subcellular location is the periplasm. In terms of biological role, required for efficient cell division, cell polarity and normal cell morphology. Facilitates remodeling of the peptidoglycan layer and, thus, coordinated constriction of the cell envelope during the division process. Plays a critical role in maintaining proper cell envelope architecture during growth and division. Required for normal envelope invagination during cell division and to establish or maintain outer membrane connections throughout the cell envelope. May serve as a regulatory hub coordinating the activities of multiple peptidoglycan-degrading enzymes during cell constriction. Required to position SdpA and SdpB at midcell. The protein is Cell division protein DipM of Caulobacter vibrioides (strain NA1000 / CB15N) (Caulobacter crescentus).